The primary structure comprises 38 residues: Photosystem I reaction center subunit IX (38 aa).

The helical transmembrane segment at 4-24 (FLTTAPVVAAIWFTLTAGILI) threads the bilayer.

Belongs to the PsaJ family.

It is found in the cellular thylakoid membrane. May help in the organization of the PsaE and PsaF subunits. The polypeptide is Photosystem I reaction center subunit IX (Parasynechococcus marenigrum (strain WH8102)).